The primary structure comprises 1841 residues: Sodium channel protein type 4 subunit alpha (1841 aa).

Residues 1 to 131 lie on the Cytoplasmic side of the membrane; it reads MASSSLPTLV…RVAIKVLIHA (131 aa). The segment covering 32 to 60 has biased composition (basic and acidic residues); it reads AMEEEARLQRNKQMEIEEPERKPRSDLEA. Positions 32-63 are disordered; that stretch reads AMEEEARLQRNKQMEIEEPERKPRSDLEAGKN. One copy of the I repeat lies at 113–448; sequence MLSPFSIVRR…VVAMAYAEQN (336 aa). Residues 132–150 traverse the membrane as a helical segment; the sequence is LFSMFIMITILTNCVFMTM. The Extracellular segment spans residues 151–157; the sequence is SNPPSWS. Residues 158–178 traverse the membrane as a helical segment; that stretch reads KDVEYTFTGIYTFESLIKMLA. Residues 179 to 192 lie on the Cytoplasmic side of the membrane; the sequence is RGFCIDDFTFLRDP. Residues 193–210 traverse the membrane as a helical segment; that stretch reads WNWLDFSVITMAYVTEFV. The Extracellular portion of the chain corresponds to 211–216; the sequence is DLGNIS. Asn-214 carries an N-linked (GlcNAc...) asparagine glycan. Residues 217-233 form a helical membrane-spanning segment; the sequence is ALRTFRVLRALKTITVI. At 234–252 the chain is on the cytoplasmic side; it reads PGLKTIVGALIQSVKKLSD. Residues 253–272 traverse the membrane as a helical segment; sequence VMILTVFCLSVFALVGLQLF. Residues 273-385 are Extracellular-facing; the sequence is MGNLRQKCVR…PNYGYTSYDT (113 aa). The cysteines at positions 280 and 354 are disulfide-linked. N-linked (GlcNAc...) asparagine glycans are attached at residues Asn-288, Asn-291, Asn-297, Asn-303, Asn-315, Asn-327, and Asn-356. An intrachain disulfide couples Cys-363 to Cys-369. An intramembrane region (pore-forming) is located at residues 386–410; that stretch reads FSWAFLALFRLMTQDYWENLFQLTL. The Extracellular portion of the chain corresponds to 411–417; the sequence is RAAGKTY. A helical membrane pass occupies residues 418-438; that stretch reads MIFFVVIIFLGSFYLINLILA. Over 439–572 the chain is Cytoplasmic; it reads VVAMAYAEQN…HIILLIVMDP (134 aa). The disordered stretch occupies residues 484 to 522; that stretch reads ALEGGEEADGDPTHSKDCNGSLDTSGEKGPPRPSCSAES. The II repeat unit spans residues 554–826; sequence CCAPWVKFKH…QIAIGRIKWG (273 aa). A helical transmembrane segment spans residues 573–591; sequence FVDLGITICIVLNTLFMAM. The Extracellular segment spans residues 592-602; sequence EHYPMTEHFDN. The helical transmembrane segment at 603-622 threads the bilayer; sequence VLSVGNLVFTGIFTAEMVLK. The Cytoplasmic segment spans residues 623 to 636; that stretch reads LIAMDPYEYFQQGW. A helical transmembrane segment spans residues 637–656; that stretch reads NIFDSFIVTLSLVELGLANV. Residues 657 to 658 lie on the Extracellular side of the membrane; it reads QG. Residues 659-676 traverse the membrane as a helical segment; the sequence is LSVLRSFRLLRVFKLAKS. Topologically, residues 677–692 are cytoplasmic; the sequence is WPTLNMLIKIIGNSVG. A helical transmembrane segment spans residues 693–711; the sequence is ALGNLTLVLAIIVFIFAVV. The Extracellular segment spans residues 712-740; sequence GMQLFGKSYKECVCKIASDCSLPRWHMHD. A disulfide bridge links Cys-725 with Cys-731. An intramembrane region (pore-forming) is located at residues 741 to 761; it reads FFHSFLIVFRILCGEWIETMW. At 762–772 the chain is on the extracellular side; sequence DCMEVAGQAMC. A disulfide bond links Cys-763 and Cys-772. The helical transmembrane segment at 773-791 threads the bilayer; the sequence is LTVFLMVMVIGNLVVLNLF. Over 792 to 1026 the chain is Cytoplasmic; sequence LALLLSSFSA…ACFKIVEHNW (235 aa). 2 disordered regions span residues 854 to 896 and 925 to 983; these read EPGG…LTDG and SDLE…EGEL. Residues 867–887 show a composition bias toward basic and acidic residues; sequence EDEKKEPPPEDGNKELKDNHI. Composition is skewed to acidic residues over residues 925–941 and 969–983; these read SDLE…FSEP and EDPE…EGEL. An III repeat occupies 1007–1320; the sequence is RGKMWWTLRR…KKYYNAMKKL (314 aa). A helical membrane pass occupies residues 1027-1044; it reads FETFIVFMILLSSGALAF. Over 1045–1057 the chain is Extracellular; that stretch reads EDIYIEQRRVIRT. The helical transmembrane segment at 1058 to 1076 threads the bilayer; the sequence is ILEYADKVFTYIFILEMLL. At 1077–1090 the chain is on the cytoplasmic side; that stretch reads KWVAYGFKVYFTNA. Residues 1091 to 1109 traverse the membrane as a helical segment; the sequence is WCWLDFLIVDVSIISLVAN. Over 1110–1117 the chain is Extracellular; the sequence is WLGYSELG. A helical transmembrane segment spans residues 1118–1136; it reads PIKSLRTLRALRPLRALSR. At 1137–1153 the chain is on the cytoplasmic side; the sequence is FEGMRVVVNALLGAIPS. Residues 1154 to 1173 traverse the membrane as a helical segment; that stretch reads IMNVLLVCLIFWLIFSIMGV. Topologically, residues 1174–1224 are extracellular; the sequence is NLFAGKFYYCINTTTSERFDISVVNNKSECESLMYTGQVRWMNVKVNYDNV. Cys-1183 and Cys-1203 are oxidised to a cystine. Asn-1185 and Asn-1199 each carry an N-linked (GlcNAc...) asparagine glycan. An intramembrane region (pore-forming) is located at residues 1225–1246; sequence GLGYLSLLQVATFKGWMDIMYA. The Extracellular portion of the chain corresponds to 1247 to 1263; that stretch reads AVDSREKEEQPDYEVNL. A helical transmembrane segment spans residues 1264–1285; it reads YMYLYFVIFIIFGSFFTLNLFI. Over 1286-1348 the chain is Cytoplasmic; that stretch reads GVIIDNFNQQ…MVYDFVTKQV (63 aa). An important for rapid channel inactivation region spans residues 1304 to 1306; that stretch reads IFM. One copy of the IV repeat lies at 1329-1627; sequence IPRPQNKIQG…WEKFDPDATQ (299 aa). The helical transmembrane segment at 1349–1366 threads the bilayer; it reads FDISIMILICLNMVTMMV. Residues 1367-1377 lie on the Extracellular side of the membrane; the sequence is ETDDQSQLKVD. Residues 1378-1396 traverse the membrane as a helical segment; the sequence is ILYNINMVFIIVFTGECVL. Over 1397 to 1408 the chain is Cytoplasmic; it reads KMFALRHYYFTI. Residues 1409 to 1426 form a helical membrane-spanning segment; the sequence is GWNIFDFVVVILSIVGLA. Topologically, residues 1427 to 1439 are extracellular; it reads LSDLIQKYFVSPT. The helical transmembrane segment at 1440–1456 threads the bilayer; the sequence is LFRVIRLARIGRVLRLI. At 1457 to 1475 the chain is on the cytoplasmic side; it reads RGAKGIRTLLFALMMSLPA. A helical transmembrane segment spans residues 1476-1493; that stretch reads LFNIGLLLFLVMFIYSIF. At 1494-1515 the chain is on the extracellular side; that stretch reads GMSNFAYVKKESGIDDMFNFET. An intramembrane region (pore-forming) is located at residues 1516–1538; that stretch reads FGNSIICLFEITTSAGWDGLLNP. At 1539-1568 the chain is on the extracellular side; the sequence is ILNSGPPDCDPTLENPGTNIKGDCGNPSIG. A disulfide bridge connects residues Cys-1547 and Cys-1562. Residues 1569–1591 traverse the membrane as a helical segment; that stretch reads ICFFCSYIIISFLIVVNMYIAII. Over 1592–1841 the chain is Cytoplasmic; it reads LENFNVATEE…VRPGVKESLV (250 aa). One can recognise an IQ domain in the interval 1721–1750; that stretch reads EEVCAIKIQRAYRRHLLQRSVKQASYMYRH. Residues 1776–1794 are compositionally biased toward basic and acidic residues; the sequence is SEKEDNGVQSQGEKEKDST. Residues 1776-1841 form a disordered region; sequence SEKEDNGVQS…VRPGVKESLV (66 aa). A compositionally biased stretch (polar residues) spans 1801–1812; it reads TEVTAPSSSDTA. Pro residues predominate over residues 1814-1826; sequence TPPPPSPPPPSSP.

It belongs to the sodium channel (TC 1.A.1.10) family. Nav1.4/SCN4A subfamily. In terms of assembly, the Nav1.4 voltage-gated sodium channel consists of an ion-conducting alpha subunit SCN4A which is functional on its own and a regulatory beta subunit SCN1B. SCN1B strongly enhances the presence of SCN4A at the cell surface. SCN1B is also required for rapid channel inactivation and recovery after inactivation. It prevents the decrease of channel activity in response to repetitive, high-frequency depolarizations. Interacts with the syntrophins SNTA1, SNTB1 and SNTB2 (via PDZ domain); probably links SCN4A to the actin cytoskeleton and the extracellular matrix via the dystrophin-associated protein complex and regulates its localization in muscle cells. Interacts with TMEM233; probable regulator of the channel. As to expression, detected in quadriceps muscle (at protein level). Detected in hind-limb skeletal muscles, but not in heart or brain. Detected at low levels in the myocardium. According to Pubme=26427606 detected also in brain.

Its subcellular location is the cell membrane. The enzyme catalyses Na(+)(in) = Na(+)(out). With respect to regulation, the channel is inhibited by tetrodotoxin. Its function is as follows. Pore-forming subunit of Nav1.4, a voltage-gated sodium (Nav) channel that directly mediates the depolarizing phase of action potentials in excitable membranes. Navs, also called VGSCs (voltage-gated sodium channels) or VDSCs (voltage-dependent sodium channels), operate by switching between closed and open conformations depending on the voltage difference across the membrane. In the open conformation they allow Na(+) ions to selectively pass through the pore, along their electrochemical gradient. The influx of Na+ ions provokes membrane depolarization, initiating the propagation of electrical signals throughout cells and tissues. Highly expressed in skeletal muscles, Nav1.4 generates the action potential crucial for muscle contraction. In Mus musculus (Mouse), this protein is Sodium channel protein type 4 subunit alpha.